The sequence spans 168 residues: Photosystem I assembly protein Ycf3 (168 aa).

TPR repeat units lie at residues 35-68 (AFTY…EIDP), 72-105 (SYIL…NPFL), and 120-153 (GEQA…TPGN).

The protein belongs to the Ycf3 family.

It is found in the plastid. The protein localises to the chloroplast thylakoid membrane. Essential for the assembly of the photosystem I (PSI) complex. May act as a chaperone-like factor to guide the assembly of the PSI subunits. In Oenothera elata subsp. hookeri (Hooker's evening primrose), this protein is Photosystem I assembly protein Ycf3.